The following is a 910-amino-acid chain: MIKNLISAFSQGVGIQKKELPSTIILNKDDYKEANYYNYYRNLELNKPDEVLARRIAGLAPIAYQYYNVSSFDNNQFKIVDFSIDSKLNDTCLTCVWTQTYKNESKTPVEAVYRIPLSPLSTVSAFSVQFNGKTLHGKIKDSTKAQEKYDDAIASGGQAFLAEKSKDDDNYFNFKLGNIPPTESSITIHITMISEIGSHLNSLHYLLHRYCFPQSSNYNFSLSLSVNLSNSIKSIFFDGDKSHSLQYENKEKTKCIIQYKKSLGFNTQPNILIVFELDDLNKPQSFIEKLSINKEDIKNNPHSDSDSDSDDEENKKENEKSSYAIALNFFPKFESINKEDIYQKGEFIFLIDCSGSMSGNPIDSARRALEIIIRSLNEQCKFNIYCFGSGFNKAFQEGSRKYDDDSLAVVNRYVSNISANLGGTELLQPIKDILSKEIDPEYPRQIFILTDGAVSDRSKLIEFVSKESKTTRIFTYGIGSSVDVELVVGLSKACKGYYTLIRNSSDMETEVMKLLSIAFEPTLSNVSFDWSQLLDLSNGKSTTIIQSPTQIRPIFNNERMMVYATIELDNDISNNIENHGQPVIVTMNADGPLGDRLSYHVELDFKNYSQSNSIHTLAAFKRIQDLEEIERKSSKETEKLEIIKLGKKYNLVSKHTSLVVTSDSDSPTEDTMKVINILPNNSQHPIIVDRCHTFAVNFNSPLQYQQQQQQQQQNFNSGFAPPPPPMMSSGPPPPPGSSFGAPPPPPPGGAFPTSSISEKKSSSQSSSSYLPPTMSLSRKSSLSPSSPSKNYPSPKLSSPSLSYGSTQSESTPSNDPLISLLAKQKANGSWSKSSIQDQFSSAISKIPNELSAVEDVWATLLVISKIMKTFASQKSKWELSVQKSNKWVKQQLLKLNLSFDQFLELAKSNV.

Positions 63–194 constitute a VIT domain; the sequence is AYQYYNVSSF…SITIHITMIS (132 aa). Residues 297 to 318 form a disordered region; sequence IKNNPHSDSDSDSDDEENKKEN. Residues 346–515 enclose the VWFA domain; that stretch reads EFIFLIDCSG…DMETEVMKLL (170 aa). Over residues 703–719 the composition is skewed to low complexity; it reads QYQQQQQQQQQNFNSGF. Positions 703 to 815 are disordered; the sequence is QYQQQQQQQQ…TQSESTPSND (113 aa). Positions 720 to 749 are enriched in pro residues; that stretch reads APPPPPMMSSGPPPPPGSSFGAPPPPPPGG. Residues 750–802 show a composition bias toward low complexity; that stretch reads AFPTSSISEKKSSSQSSSSYLPPTMSLSRKSSLSPSSPSKNYPSPKLSSPSLS. Residues 803-815 are compositionally biased toward polar residues; the sequence is YGSTQSESTPSND.

This is von Willebrand factor A domain-containing protein DDB_G0292740 from Dictyostelium discoideum (Social amoeba).